The primary structure comprises 92 residues: Small ribosomal subunit protein uS19 (92 aa).

This sequence belongs to the universal ribosomal protein uS19 family.

Its function is as follows. Protein S19 forms a complex with S13 that binds strongly to the 16S ribosomal RNA. This is Small ribosomal subunit protein uS19 from Treponema denticola (strain ATCC 35405 / DSM 14222 / CIP 103919 / JCM 8153 / KCTC 15104).